The chain runs to 64 residues: Large ribosomal subunit protein bL35 (64 aa).

Residues 1–22 are disordered; it reads MPKAKTHSGASKRFRRTGTGKI.

This sequence belongs to the bacterial ribosomal protein bL35 family.

This Mycobacterium tuberculosis (strain ATCC 25177 / H37Ra) protein is Large ribosomal subunit protein bL35.